A 190-amino-acid chain; its full sequence is Probable nicotinate-nucleotide adenylyltransferase (190 aa).

It belongs to the NadD family.

The enzyme catalyses nicotinate beta-D-ribonucleotide + ATP + H(+) = deamido-NAD(+) + diphosphate. It functions in the pathway cofactor biosynthesis; NAD(+) biosynthesis; deamido-NAD(+) from nicotinate D-ribonucleotide: step 1/1. Its function is as follows. Catalyzes the reversible adenylation of nicotinate mononucleotide (NaMN) to nicotinic acid adenine dinucleotide (NaAD). This chain is Probable nicotinate-nucleotide adenylyltransferase, found in Borrelia hermsii (strain HS1 / DAH).